A 429-amino-acid polypeptide reads, in one-letter code: Serine hydroxymethyltransferase (429 aa).

Residues Leu-133 and 137–139 (GHL) each bind (6S)-5,6,7,8-tetrahydrofolate. N6-(pyridoxal phosphate)lysine is present on Lys-243. Glu-259 contributes to the (6S)-5,6,7,8-tetrahydrofolate binding site.

The protein belongs to the SHMT family. Homodimer. Pyridoxal 5'-phosphate is required as a cofactor.

The protein resides in the cytoplasm. It catalyses the reaction (6R)-5,10-methylene-5,6,7,8-tetrahydrofolate + glycine + H2O = (6S)-5,6,7,8-tetrahydrofolate + L-serine. The protein operates within one-carbon metabolism; tetrahydrofolate interconversion. It functions in the pathway amino-acid biosynthesis; glycine biosynthesis; glycine from L-serine: step 1/1. Its function is as follows. Catalyzes the reversible interconversion of serine and glycine with tetrahydrofolate (THF) serving as the one-carbon carrier. This reaction serves as the major source of one-carbon groups required for the biosynthesis of purines, thymidylate, methionine, and other important biomolecules. Also exhibits THF-independent aldolase activity toward beta-hydroxyamino acids, producing glycine and aldehydes, via a retro-aldol mechanism. The sequence is that of Serine hydroxymethyltransferase from Aster yellows witches'-broom phytoplasma (strain AYWB).